Consider the following 100-residue polypeptide: Large ribosomal subunit protein uL23 (100 aa).

It belongs to the universal ribosomal protein uL23 family. As to quaternary structure, part of the 50S ribosomal subunit. Contacts protein L29, and trigger factor when it is bound to the ribosome.

One of the early assembly proteins it binds 23S rRNA. One of the proteins that surrounds the polypeptide exit tunnel on the outside of the ribosome. Forms the main docking site for trigger factor binding to the ribosome. The sequence is that of Large ribosomal subunit protein uL23 from Thermotoga maritima (strain ATCC 43589 / DSM 3109 / JCM 10099 / NBRC 100826 / MSB8).